Here is a 193-residue protein sequence, read N- to C-terminus: Tetrahydromethanopterin S-methyltransferase subunit A 2 (193 aa).

Residues 1-38 (MADKKPTAENWPVVSGDYIVGDPESPVAVTTLASHNED) lie on the Cytoplasmic side of the membrane. The helical transmembrane segment at 39-58 (IPAAAGAAIAGPCKTENLGI) threads the bilayer. Topologically, residues 59-193 (EKVVANIISN…SESEKIESEA (135 aa)) are extracellular. Residue H84 participates in 5-hydroxybenzimidazolylcob(I)amide binding. The interval 174 to 193 (SKKSSFVESSSESEKIESEA) is disordered.

Belongs to the MtrA family. In terms of assembly, the complex is composed of 8 subunits; MtrA, MtrB, MtrC, MtrD, MtrE, MtrF, MtrG and MtrH. It depends on 5-hydroxybenzimidazolylcob(I)amide as a cofactor.

Its subcellular location is the cell membrane. The catalysed reaction is 5-methyl-5,6,7,8-tetrahydromethanopterin + coenzyme M + 2 Na(+)(in) = 5,6,7,8-tetrahydromethanopterin + methyl-coenzyme M + 2 Na(+)(out). The protein operates within one-carbon metabolism; methanogenesis from CO(2); methyl-coenzyme M from 5,10-methylene-5,6,7,8-tetrahydromethanopterin: step 2/2. Its function is as follows. Part of a complex that catalyzes the formation of methyl-coenzyme M and tetrahydromethanopterin from coenzyme M and methyl-tetrahydromethanopterin. This is an energy-conserving, sodium-ion translocating step. In Methanobrevibacter ruminantium (strain ATCC 35063 / DSM 1093 / JCM 13430 / OCM 146 / M1) (Methanobacterium ruminantium), this protein is Tetrahydromethanopterin S-methyltransferase subunit A 2.